Reading from the N-terminus, the 371-residue chain is Ribosomal RNA small subunit methyltransferase H (371 aa).

Residues 43–45 (GGH), Asp-62, Leu-96, Asp-110, and Gln-117 each bind S-adenosyl-L-methionine. The interval 315 to 371 (AAERLDPTQQQRQRTDRERYRRQVRAMHQPGTGSAVRRPVSGDDGTGTDEEGEGHDD) is disordered. Residues 360 to 371 (TGTDEEGEGHDD) show a composition bias toward acidic residues.

It belongs to the methyltransferase superfamily. RsmH family.

Its subcellular location is the cytoplasm. It catalyses the reaction cytidine(1402) in 16S rRNA + S-adenosyl-L-methionine = N(4)-methylcytidine(1402) in 16S rRNA + S-adenosyl-L-homocysteine + H(+). Specifically methylates the N4 position of cytidine in position 1402 (C1402) of 16S rRNA. The protein is Ribosomal RNA small subunit methyltransferase H of Salinispora tropica (strain ATCC BAA-916 / DSM 44818 / JCM 13857 / NBRC 105044 / CNB-440).